The chain runs to 287 residues: Nucleotide-binding protein Sfri_3380 (287 aa).

8–15 is an ATP binding site; sequence GRSGSGKS. Position 56 to 59 (56 to 59) interacts with GTP; it reads DVRN.

The protein belongs to the RapZ-like family.

Functionally, displays ATPase and GTPase activities. This Shewanella frigidimarina (strain NCIMB 400) protein is Nucleotide-binding protein Sfri_3380.